The primary structure comprises 162 residues: Ribosome-binding factor A (162 aa).

The disordered stretch occupies residues 123-162 (VARVAAGASPAGDPDPYKEPRVEDADDAEVDEPSRSRQAD). Low complexity predominate over residues 125 to 136 (RVAAGASPAGDP).

Belongs to the RbfA family. As to quaternary structure, monomer. Binds 30S ribosomal subunits, but not 50S ribosomal subunits or 70S ribosomes.

The protein resides in the cytoplasm. One of several proteins that assist in the late maturation steps of the functional core of the 30S ribosomal subunit. Associates with free 30S ribosomal subunits (but not with 30S subunits that are part of 70S ribosomes or polysomes). Required for efficient processing of 16S rRNA. May interact with the 5'-terminal helix region of 16S rRNA. This Rhodococcus opacus (strain B4) protein is Ribosome-binding factor A.